We begin with the raw amino-acid sequence, 4684 residues long: Plectin (4684 aa).

A globular 1 region spans residues 1–1470; the sequence is MVAGMLMPRD…SELTTLTSQY (1470 aa). A phosphoserine mark is found at F20 and R21. V26 is modified (phosphotyrosine). G42 bears the Phosphoserine mark. T113 is subject to Phosphothreonine. Residues S125 and S149 each carry the phosphoserine modification. The disordered stretch occupies residues 144 to 179; that stretch reads ELEEVSPETPVVPATTQRTLARPGPEPAPATDERDR. Residues 175–400 are actin-binding; it reads DERDRVQKKT…YVSSLYDAMP (226 aa). Calponin-homology (CH) domains follow at residues 179 to 282 and 295 to 400; these read RVQK…LHFQ and MTAK…DAMP. Residues 645-710 form a Spectrin 1 repeat; sequence LQSVQRRPEL…SIEEFRAKIE (66 aa). Position 720 is a phosphoserine (S720). Spectrin repeat units lie at residues 740 to 824 and 837 to 930; these read KLLN…REDH and LQTQ…AVVQ. The 58-residue stretch at 941 to 998 folds into the SH3 domain; the sequence is RGRLPLLAVCDYKQVEVTVHKGDECQLVGPAQPSHWKVLSSSGSEAAVPSVCFLVPPP. The interval 964-4574 is required for interaction with intermediate filament proteins; sequence ECQLVGPAQP…VGAYSKYLTC (3611 aa). A Phosphoserine modification is found at S1047. Residues 1315 to 1415 form a Spectrin 4 repeat; it reads RERVAQLLER…QRFAKQYINA (101 aa). At S1435 the chain carries Phosphoserine. A coiled-coil region spans residues 1469-2756; sequence QYIKFISETL…AHSEEVTASQ (1288 aa). The interval 1471–2755 is central fibrous rod domain; the sequence is IKFISETLRR…LAHSEEVTAS (1285 aa). Residues 1618-1650 form a disordered region; the sequence is RAEEAEAQKRQAQEEAERLRRQVQDESQRKRQA. At S1721 the chain carries Phosphoserine. K1725 is modified (N6-acetyllysine). The residue at position 1732 (S1732) is a Phosphoserine. Disordered regions lie at residues 1794-1836, 2105-2139, and 2217-2307; these read LAQA…KQRQ, EAAR…EAAR, and RGEA…MEKH. 3 stretches are compositionally biased toward basic and acidic residues: residues 1798–1836, 2105–2128, and 2217–2258; these read EAEK…KQRQ, EAAR…ERVQ, and RGEA…KQSA. The span at 2259–2272 shows a compositional bias: low complexity; that stretch reads EEQAQARAQAQAAA. The span at 2273–2288 shows a compositional bias: basic and acidic residues; that stretch reads EKLRKEAEQEAARRAQ. A Phosphoserine modification is found at S2631. K2636 bears the N6-acetyllysine mark. Disordered stretches follow at residues 2668 to 2707 and 2763 to 2784; these read REEQ…RRKQ and LPNG…HSFD. Over residues 2679–2707 the composition is skewed to basic and acidic residues; it reads EQERQRLVASMEEARRRQHEAEEGVRRKQ. The segment at 2756 to 4684 is globular 2; it reads QVAATKTLPN…SLGGPESAVA (1929 aa). Residues S2782 and S2802 each carry the phosphoserine modification. Plectin repeat units follow at residues 2826–2863, 2864–2901, 2902–2939, 2940–2977, and 2981–3015; these read RHYL…PGTA, LILL…PELH, HKLL…REHG, IRLL…EEMN, and ADPS…PETG. T2886 bears the Phosphothreonine mark. Phosphotyrosine is present on Y3033. S3036 carries the phosphoserine modification. Residues K3053 and K3091 each carry the N6-acetyllysine modification. Plectin repeat units lie at residues 3116 to 3153, 3154 to 3191, 3192 to 3229, 3230 to 3267, 3268 to 3305, and 3306 to 3343; these read SLVP…VDTV, RRAL…SDMA, VALL…PEFH, EKLL…REQG, LRLL…EETS, and RALS…QLTG. Positions 3310–3331 are disordered; sequence APRADAKAYSDPSTGEPATYGE. Y3362 is modified (phosphotyrosine). K3420 is subject to N6-acetyllysine. 5 Plectin repeats span residues 3485–3522, 3523–3560, 3561–3598, 3599–3636, and 3640–3674; these read RTLL…ATTA, ALLL…PELH, EQLL…RQHG, IRLL…EEMN, and ADPS…PETG. S3580 carries the post-translational modification Phosphoserine. At T3785 the chain carries Phosphothreonine. 5 Plectin repeats span residues 3820–3857, 3858–3895, 3896–3933, 3934–3971, and 3975–4008; these read WCYL…AEVA, RLLL…PELH, DRLL…TEEA, LRLL…KDTH, and SEPS…DGTG. Residues 3956–4293 are required for interaction with type2 keratins, DES and VIM; the sequence is PLEVAYQRGY…ETGKEMSVYE (338 aa). T4030 bears the Phosphothreonine mark. Position 4054 is a phosphoserine (S4054). Plectin repeat units follow at residues 4063–4100, 4101–4138, 4139–4176, 4177–4214, 4218–4252, 4265–4305, and 4319–4356; these read QKFL…PGTA, FELL…PEFK, DKLL…KDHG, IRLL…EEMN, TDPS…PQTG, RKTS…HQTY, and TISS…RSAL. A binding to intermediate filaments region spans residues 4250–4300; the sequence is QTGLCLLPLKEKKRERKTSSKSSVRKRRVVIVDPETGKEMSVYEAYRKGLI. S4382, S4384, S4385, S4386, S4389, S4390, S4391, and S4392 each carry phosphoserine. Phosphotyrosine is present on Y4393. Phosphoserine is present on residues S4396, S4400, and S4406. 5 Plectin repeats span residues 4408–4445, 4446–4483, 4484–4521, 4522–4559, and 4560–4597; these read SDPT…NITG, QRLL…KIMV, DRIN…YEAG, QRFL…ARTA, and QKLR…EGTG. Phosphothreonine is present on T4411. Residues 4505–4574 form a required for efficient interaction with KRT5 and KRT14 heterodimers region; sequence MSAAQALKKG…VGAYSKYLTC (70 aa). T4539 carries the phosphothreonine; by CDK1 modification. Phosphoserine is present on residues S4607 and S4613. Positions 4611–4678 are enriched in low complexity; it reads YYSPYSVSGS…ASGSSASLGG (68 aa). A disordered region spans residues 4611–4684; sequence YYSPYSVSGS…SLGGPESAVA (74 aa). At Y4615 the chain carries Phosphotyrosine. A phosphoserine mark is found at S4616, S4618, and S4622. A Phosphothreonine modification is found at T4623. Residues 4625–4640 form a 4 X 4 AA tandem repeats of G-S-R-X region; it reads GSRTGSRTGSRAGSRR. At S4626 the chain carries Phosphoserine. Omega-N-methylarginine is present on residues R4627 and R4640. Phosphoserine is present on residues S4642, S4672, and S4675.

Belongs to the plakin or cytolinker family. Homodimer or homotetramer. Interacts (via actin-binding domain) with SYNE3. Interacts (via calponin-homology (CH) 1 domain) with VIM (via rod region). Interacts (via N-terminus) with DST isoform 2 (via N-terminus). Interacts with FER. Interacts with TOR1A. Interacts with ANK3. Identified in complexes that contain VIM, EZR, AHNAK, BFSP1, BFSP2, ANK2, PLEC, PRX and spectrin. Interacts with COL17A1. As to quaternary structure, interacts with KRT14, heterodimers consisting of KRT8 and KRT18, heterodimers consisting of KRT5 and KRT14, heterodimers consisting of KRT14 and KRT15, and heterodimers consisting of KRT1 and KRT10. Interacts with DES and VIM. In terms of processing, phosphorylated by CDK1; regulates dissociation from intermediate filaments during mitosis. In terms of tissue distribution, widely expressed with highest levels in muscle, heart, placenta and spinal cord.

It localises to the cytoplasm. The protein resides in the cytoskeleton. The protein localises to the cell junction. It is found in the hemidesmosome. Its subcellular location is the cell projection. It localises to the podosome. Functionally, interlinks intermediate filaments with microtubules and microfilaments and anchors intermediate filaments to desmosomes or hemidesmosomes. Could also bind muscle proteins such as actin to membrane complexes in muscle. May be involved not only in the filaments network, but also in the regulation of their dynamics. Structural component of muscle. Isoform 9 plays a major role in the maintenance of myofiber integrity. In Homo sapiens (Human), this protein is Plectin (PLEC).